A 662-amino-acid polypeptide reads, in one-letter code: ATP-dependent RNA helicase DDX3X (662 aa).

Residue serine 2 is modified to N-acetylserine. Residues 2–139 (SHVAVENALG…KSDEDDWSKP (138 aa)) form a required for TBK1 and IKBKE-dependent IFNB1 activation region. A Nuclear export signal motif is present at residues 12–21 (LDQQFAGLDL). The disordered stretch occupies residues 19–144 (LDLNSSDNQS…DWSKPLPPSE (126 aa)). Polar residues predominate over residues 21 to 34 (LNSSDNQSGGSTAS). The tract at residues 38–44 (YIPPHLR) is interaction with EIF4E. The segment covering 44-68 (RNREATKGFYDKDSSGWSSSKDKDA) has biased composition (basic and acidic residues). At lysine 55 the chain carries N6-acetyllysine. Phosphoserine occurs at positions 82 and 90. Residues 94-130 (GRFDDRGRGDYDGIGGRGDRSGFGKFERGGNSRWCDK) are compositionally biased toward basic and acidic residues. Positions 100-110 (GRGDYDGIGGR) are interaction with IKBKE. Residues 100–662 (GRGDYDGIGG…NSQGVDWWGN (563 aa)) are interaction with GSK3B. Arginine 101 is subject to Omega-N-methylarginine. Tyrosine 104 bears the Phosphotyrosine mark. The residue at position 110 (arginine 110) is an Omega-N-methylarginine. Residue lysine 118 is modified to N6-acetyllysine. Position 131 is a phosphoserine (serine 131). Positions 139–172 (PLPPSERLEQELFSGGNTGINFEKYDDIPVEATG) are interaction with CHUK. The Q motif signature appears at 180–208 (ESFSDVEMGEIIMGNIELTRYTRPTPVQK). Serine 183 is subject to Phosphoserine. 200-207 (YTRPTPVQ) provides a ligand contact to ATP. Positions 211-403 (IPIIKEKRDL…RDFLDEYIFL (193 aa)) constitute a Helicase ATP-binding domain. Lysine 215 participates in a covalent cross-link: Glycyl lysine isopeptide (Lys-Gly) (interchain with G-Cter in SUMO2). 224–231 (AQTGSGKT) is an ATP binding site. The tract at residues 250 to 259 (ALRAMKENGR) is involved in stimulation of ATPase activity by DNA and RNA, nucleic acid binding and unwinding. The short motif at 347–350 (DEAD) is the DEAD box element. A Helicase C-terminal domain is found at 414-575 (NITQKVVWVE…EVPSWLENMA (162 aa)). Serine 456 is modified (phosphoserine). An interaction with NXF1 region spans residues 536-661 (GNLGLATSFF…YNSQGVDWWG (126 aa)). Position 592 is an omega-N-methylarginine (arginine 592). 3 positions are modified to phosphoserine: serine 594, serine 605, and serine 612. The disordered stretch occupies residues 601–633 (DYRQSSGASSSSFSSSRASSSRSGGGGHGGSRG). The segment covering 604–622 (QSSGASSSSFSSSRASSSR) has biased composition (low complexity). Omega-N-methylarginine occurs at positions 617 and 632. Residues 623–633 (SGGGGHGGSRG) are compositionally biased toward gly residues.

The protein belongs to the DEAD box helicase family. DDX3/DED1 subfamily. As to quaternary structure, homodimer; can bind RNA as a monomer and as a dimer/oligomer. Interacts with TDRD3. When phosphorylated, interacts with IRF3; the interaction facilitates the phosphorylation and activation of IRF3 by IKBKE. Directly interacts with XPO1/CRM1. The interaction with XPO1/CMR1 is dependent on the DDX3X nuclear export signal motif and XPO1 interaction with GTPase RAN in its active GTP-bound form. Weakly interacts with TBKBP1/SINTBAD. Directly interacts with TRAF3; this interaction stimulates TRAF3 'Lys-63' ubiquitination. Interacts with CSNK1E in a Wnt-dependent manner; this interaction greatly enhances CSNK1E affinity for ATP, stimulates its kinase activity and promotes CSNK1E-mediated DVL2 phosphorylation. In the presence of RNA, the interaction is decreased. Also interacts with CSNK1D and stimulates its kinase activity. Interacts with TRPV4; this interaction is decreased when the TRPV4 channel is activated, leading to DDX3X relocalization to the nucleus. Interacts with MAP3K14/NIK. Directly interacts with CHUK/IKKA after physiological activation of the TLR7 and TLR8 pathways; this interaction enhances CHUK autophosphorylation. May associate with EIF4F complex, composed of at least EIF4A, EIF4E and EIF4G1/EIF4G3. Directly interacts with EIF4E in an RNA-independent manner; this interaction enhances EIF4E cap-binding ability. Directly interacts with EIF4G1 in an RNA-independent manner. DDX3X competes with EIF4G1 for interaction with EIF4E. Interacts with EIF4A1 and EIF2S1 in an RNA-independent manner. Associates with the eukaryotic translation initiation factor 3 (eIF-3) complex, including with EIF3B and EIF3C subunits. Directly interacts with IKBKE/IKKE; this interaction stimulates IKBKE activating autophosphorylation and is induced upon viral infection. Interacts with TBK1. Interacts with SP1; this interaction potentiates SP1-induced CDKN1A/WAF1/CIP1 transcription. Interacts with GSK3A and GSK3B. Interacts with several death receptors, inclusing FAS, TNFRSF10A and TNFRSF10B. Recruited to TNFRSF10B in the absence of receptor stimulation. When TNFRSF10B is stimulated, further recruited to the receptor and cleaved by caspases. A large proteolytic fragment remains associated with TNFRSF10B. Interacts (via C-terminus) with NXF1/TAP; this interaction may be partly involved in DDX3X nuclear export and in NXF1 localization to stress granules. Identified in an mRNP complex, composed of at least DHX9, DDX3X, ELAVL1, HNRNPU, IGF2BP1/2, ILF3, PABPC1, PCBP2, PTBP2, STAU1, STAU2, SYNCRIP and YBX1. The interaction with IGF2BP1/2 is RNA-dependent. Directly interacts with PABPC1/PABP1 in an RNA-independent manner. This interaction increases in stressed cells and decreases during cell recovery. Interacts (via C-terminus) with MAVS/IPS-1; this interaction potentiates MAVS-mediated IFNB induction. Interacts with ERCC6/CBS. Interacts with DHX33 in an RNA-independent manner. Interacts with DDX5 in the cytoplasm; this interaction may be more efficient when both proteins are unphosphorylated. Interacts with RIGI. Interacts with IFIH1/MDA5. Interacts with NCAPH; this interaction may be important for the NCAPH localization at condensing chromosomes during mitosis. Interacts with NLRP3 (via NACHT domain) under inflammasome-activating conditions. Interacts with CAPRIN1. Interacts with HNF4A and NR0B2/SHP in an RNA-independent manner; this interaction disrupts the interaction between HNF4 and NR0B2 that forms inactive heterodimers and enhances the formation of active HNF4 homodimers. Interacts with CREBBP/CBP. Interacts with EP300/p300. Interacts with gamma-tubulin. Interacts with phosphorylated TP53. Directly interacts with RELA/p65; this interaction may trap RELA in the cytoplasm, impairing nuclear relocalization upon TNF activating signals. In terms of processing, phosphorylated by TBK1; the phosphorylation is required for the synergistic induction of IFNB mediated by TBK1 and DDX3X. Phosphorylated by IKBKE. Also phosphorylated by CSNK1E; this phosphorylation may inhibit RNA-stimulated ATPase activity. Upon stimulation of death receptors, including TNFRSF10B, recruited to receptors and cleaved by caspases. Proteolytic fragments remain associated with the receptors. This cleavage presumably inactivates DDX3X anti-apoptotic function. Post-translationally, ubiquitinated by RNF39 via 'Lys-48'-linked ubiquitination; leading to proteasomal degradation. In terms of tissue distribution, expressed in ovary, including in germinal vesicle immature and metaphase II (MII) stage oocytes (at protein level). In the brain, expressed in the granule cells of the cerebellum and dentate gyrus, the pyramidal cells of the hippocampus, the ependymal cells lining the ventricles, choroid plexi and olfactory bulb. Also accumulates in the thalamic nuclei, the dorsal region of the colliculi and the pontine nucleus.

It localises to the cell membrane. Its subcellular location is the nucleus. It is found in the cytoplasm. The protein localises to the stress granule. The protein resides in the inflammasome. It localises to the cell projection. Its subcellular location is the lamellipodium. The enzyme catalyses ATP + H2O = ADP + phosphate + H(+). Functionally, multifunctional ATP-dependent RNA helicase. The ATPase activity can be stimulated by various ribo-and deoxynucleic acids indicative for a relaxed substrate specificity. In vitro can unwind partially double-stranded DNA with a preference for 5'-single-stranded DNA overhangs. Binds RNA G-quadruplex (rG4s) structures, including those located in the 5'-UTR of NRAS mRNA. Involved in many cellular processes, which do not necessarily require its ATPase/helicase catalytic activities. Involved in transcription regulation. Positively regulates CDKN1A/WAF1/CIP1 transcription in an SP1-dependent manner, hence inhibits cell growth. This function requires its ATPase, but not helicase activity. CDKN1A up-regulation may be cell-type specific. Binds CDH1/E-cadherin promoter and represses its transcription. Potentiates HNF4A-mediated MTTP transcriptional activation; this function requires ATPase, but not helicase activity. Facilitates HNF4A acetylation, possibly catalyzed by CREBBP/EP300, thereby increasing the DNA-binding affinity of HNF4 to its response element. In addition, disrupts the interaction between HNF4 and SHP that forms inactive heterodimers and enhances the formation of active HNF4 homodimers. By promoting HNF4A-induced MTTP expression, may play a role in lipid homeostasis. May positively regulate TP53 transcription. Associates with mRNPs, predominantly with spliced mRNAs carrying an exon junction complex (EJC). Involved in the regulation of translation initiation. Not involved in the general process of translation, but promotes efficient translation of selected complex mRNAs, containing highly structured 5'-untranslated regions (UTR). This function depends on helicase activity. Might facilitate translation by resolving secondary structures of 5'-UTRs during ribosome scanning. Alternatively, may act prior to 43S ribosomal scanning and promote 43S pre-initiation complex entry to mRNAs exhibiting specific RNA motifs, by performing local remodeling of transcript structures located close to the cap moiety. Independently of its ATPase activity, promotes the assembly of functional 80S ribosomes and disassembles from ribosomes prior to the translation elongation process. Positively regulates the translation of cyclin E1/CCNE1 mRNA and consequently promotes G1/S-phase transition during the cell cycle. May activate TP53 translation. Required for endoplasmic reticulum stress-induced ATF4 mRNA translation. Independently of its ATPase/helicase activity, enhances IRES-mediated translation; this activity requires interaction with EIF4E. Independently of its ATPase/helicase activity, has also been shown specifically repress cap-dependent translation, possibly by acting on translation initiation factor EIF4E. Involved in innate immunity, acting as a viral RNA sensor. Binds viral RNAs and promotes the production of type I interferon (IFN-alpha and IFN-beta). Potentiate MAVS/RIGI-mediated induction of IFNB in early stages of infection. Enhances IFNB1 expression via IRF3/IRF7 pathway and participates in NFKB activation in the presence of MAVS and TBK1. Involved in TBK1 and IKBKE-dependent IRF3 activation leading to IFNB induction, acts as a scaffolding adapter that links IKBKE and IRF3 and coordinates their activation. Involved in the TLR7/TLR8 signaling pathway leading to type I interferon induction, including IFNA4 production. In this context, acts as an upstream regulator of IRF7 activation by MAP3K14/NIK and CHUK/IKKA. Stimulates CHUK autophosphorylation and activation following physiological activation of the TLR7 and TLR8 pathways, leading to MAP3K14/CHUK-mediated activatory phosphorylation of IRF7. Also stimulates MAP3K14/CHUK-dependent NF-kappa-B signaling. Negatively regulates TNF-induced IL6 and IL8 expression, via the NF-kappa-B pathway. May act by interacting with RELA/p65 and trapping it in the cytoplasm. May also bind IFNB promoter; the function is independent of IRF3. Involved in both stress and inflammatory responses. Independently of its ATPase/helicase activity, required for efficient stress granule assembly through its interaction with EIF4E, hence promotes survival in stressed cells. Independently of its helicase activity, regulates NLRP3 inflammasome assembly through interaction with NLRP3 and hence promotes cell death by pyroptosis during inflammation. This function is independent of helicase activity. Therefore DDX3X availability may be used to interpret stress signals and choose between pro-survival stress granules and pyroptotic NLRP3 inflammasomes and serve as a live-or-die checkpoint in stressed cells. In association with GSK3A/B, negatively regulates extrinsic apoptotic signaling pathway via death domain receptors, including TNFRSF10B, slowing down the rate of CASP3 activation following death receptor stimulation. Cleavage by caspases may inactivate DDX3X and relieve the inhibition. Independently of its ATPase/helicase activity, allosteric activator of CSNK1E. Stimulates CSNK1E-mediated phosphorylation of DVL2, thereby involved in the positive regulation of Wnt/beta-catenin signaling pathway. Also activates CSNK1A1 and CSNK1D in vitro, but it is uncertain if these targets are physiologically relevant. ATPase and casein kinase-activating functions are mutually exclusive. May be involved in mitotic chromosome segregation. This chain is ATP-dependent RNA helicase DDX3X (Ddx3x), found in Mus musculus (Mouse).